We begin with the raw amino-acid sequence, 317 residues long: NADPH-dependent D-xylose reductase (317 aa).

The active-site Proton donor is the Tyr47. His109 is a substrate binding site. NADP(+) is bound by residues 164–165, 213–222, and 269–279; these read SN, SSFGPQSFVE, and KSNNPDRLLSN.

Belongs to the aldo/keto reductase family.

The enzyme catalyses xylitol + NAD(+) = D-xylose + NADH + H(+). It carries out the reaction xylitol + NADP(+) = D-xylose + NADPH + H(+). It participates in carbohydrate metabolism; D-xylose degradation. Its function is as follows. Reduces D-xylose into xylitol. Preferentially utilizes NADPH as a cosubstrate. In Meyerozyma guilliermondii (strain ATCC 6260 / CBS 566 / DSM 6381 / JCM 1539 / NBRC 10279 / NRRL Y-324) (Yeast), this protein is NADPH-dependent D-xylose reductase (XYL1).